The following is a 93-amino-acid chain: Large ribosomal subunit protein bL27 (93 aa).

It belongs to the bacterial ribosomal protein bL27 family.

The polypeptide is Large ribosomal subunit protein bL27 (Trichormus variabilis (strain ATCC 29413 / PCC 7937) (Anabaena variabilis)).